The chain runs to 249 residues: Triosephosphate isomerase (249 aa).

Residue 8–10 (NWK) participates in substrate binding. Catalysis depends on His-95, which acts as the Electrophile. Glu-163 (proton acceptor) is an active-site residue. Substrate-binding residues include Gly-169 and Ser-209.

Belongs to the triosephosphate isomerase family. As to quaternary structure, homodimer.

It is found in the cytoplasm. It catalyses the reaction D-glyceraldehyde 3-phosphate = dihydroxyacetone phosphate. The protein operates within carbohydrate biosynthesis; gluconeogenesis. It functions in the pathway carbohydrate degradation; glycolysis; D-glyceraldehyde 3-phosphate from glycerone phosphate: step 1/1. Its function is as follows. Involved in the gluconeogenesis. Catalyzes stereospecifically the conversion of dihydroxyacetone phosphate (DHAP) to D-glyceraldehyde-3-phosphate (G3P). The protein is Triosephosphate isomerase of Orientia tsutsugamushi (strain Ikeda) (Rickettsia tsutsugamushi).